The chain runs to 507 residues: Cytochrome P450 52A7 (507 aa).

A helical membrane pass occupies residues 6–26; sequence LHYWYYVLPAFIIFHWIVSAI. Position 456 (cysteine 456) interacts with heme.

This sequence belongs to the cytochrome P450 family. Heme serves as cofactor.

Its subcellular location is the membrane. Its function is as follows. Together with an NADPH cytochrome P450 the enzyme system catalyzes the terminal hydroxylation as the first step in the assimilation of alkanes and fatty acids. Preferentially hydroxylates lauric acid. This Candida tropicalis (Yeast) protein is Cytochrome P450 52A7 (CYP52A7).